We begin with the raw amino-acid sequence, 346 residues long: D-alanine--D-alanine ligase (346 aa).

The region spanning 133 to 324 (KLYAQSVGVK…IVDNLAKNIE (192 aa)) is the ATP-grasp domain. Residue 159 to 211 (LSFPCILKPARLGSSIGISIVKDESELKYAKDVAFEFDEDVVVEQFVSNIKEY) coordinates ATP. Positions 284, 296, and 298 each coordinate Mg(2+).

The protein belongs to the D-alanine--D-alanine ligase family. The cofactor is Mg(2+). Requires Mn(2+) as cofactor.

It is found in the cytoplasm. The enzyme catalyses 2 D-alanine + ATP = D-alanyl-D-alanine + ADP + phosphate + H(+). The protein operates within cell wall biogenesis; peptidoglycan biosynthesis. Its function is as follows. Cell wall formation. The sequence is that of D-alanine--D-alanine ligase from Campylobacter lari (strain RM2100 / D67 / ATCC BAA-1060).